The primary structure comprises 147 residues: Large ribosomal subunit protein bL9 (147 aa).

This sequence belongs to the bacterial ribosomal protein bL9 family.

Its function is as follows. Binds to the 23S rRNA. The protein is Large ribosomal subunit protein bL9 of Halalkalibacterium halodurans (strain ATCC BAA-125 / DSM 18197 / FERM 7344 / JCM 9153 / C-125) (Bacillus halodurans).